The chain runs to 329 residues: tRNA uridine(34) hydroxylase (329 aa).

The Rhodanese domain maps to 123-217; it reads SDPETVLIDT…YLEEVPKEKS (95 aa). The active-site Cysteine persulfide intermediate is Cys-177. A disordered region spans residues 310–329; it reads LNKQKKQQAKEAARKKTEKN. Residues 317–329 are compositionally biased toward basic and acidic residues; it reads QAKEAARKKTEKN.

It belongs to the TrhO family.

The catalysed reaction is uridine(34) in tRNA + AH2 + O2 = 5-hydroxyuridine(34) in tRNA + A + H2O. Functionally, catalyzes oxygen-dependent 5-hydroxyuridine (ho5U) modification at position 34 in tRNAs. This is tRNA uridine(34) hydroxylase from Francisella tularensis subsp. novicida (strain U112).